The sequence spans 243 residues: tRNA pseudouridine synthase A (243 aa).

Asp53 serves as the catalytic Nucleophile. Tyr111 serves as a coordination point for substrate.

Belongs to the tRNA pseudouridine synthase TruA family. As to quaternary structure, homodimer.

It catalyses the reaction uridine(38/39/40) in tRNA = pseudouridine(38/39/40) in tRNA. In terms of biological role, formation of pseudouridine at positions 38, 39 and 40 in the anticodon stem and loop of transfer RNAs. In Pelodictyon phaeoclathratiforme (strain DSM 5477 / BU-1), this protein is tRNA pseudouridine synthase A.